Here is a 259-residue protein sequence, read N- to C-terminus: MEHALIELDWADIGWMLGLLGAAIALLQWQGLNLTGQLLWAGGRTILQLIVVGYFLAVVFSLDNPWAVLLVLAIMLTIAAVVARNRINPRSKSLFGWLWLSLGASTAISLGYALVVIIQPPQWYSPQYLIPLTGMILGQTMNSASLAGERLASAIQQNPREIETHLCLGATPGQAIASYRRAAIRASLIPTVNQMMVVGLVSLPGMLTGQVLAGGDPLNASVYQILIMFLILLTNTLSTIAVTATVYRQYFNQHQQLLV.

A run of 7 helical transmembrane segments spans residues 4 to 24 (ALIE…GAAI), 34 to 54 (LTGQ…VVGY), 55 to 75 (FLAV…LAIM), 98 to 118 (LWLS…VVII), 128 to 148 (YLIP…SLAG), 195 to 215 (MMVV…LAGG), and 225 to 245 (ILIM…VTAT).

It belongs to the UPF0014 family.

The protein localises to the cell membrane. This is UPF0014 membrane protein slr1647 from Synechocystis sp. (strain ATCC 27184 / PCC 6803 / Kazusa).